The chain runs to 201 residues: Orotidine 5'-phosphate decarboxylase (201 aa).

Residues Asp-8, Lys-26, Asp-52–Thr-61, Thr-106, Arg-153, Gln-161, Gly-180, and Arg-181 contribute to the substrate site. Lys-54 serves as the catalytic Proton donor.

It belongs to the OMP decarboxylase family. Type 1 subfamily. In terms of assembly, homodimer.

The catalysed reaction is orotidine 5'-phosphate + H(+) = UMP + CO2. The protein operates within pyrimidine metabolism; UMP biosynthesis via de novo pathway; UMP from orotate: step 2/2. Its function is as follows. Catalyzes the decarboxylation of orotidine 5'-monophosphate (OMP) to uridine 5'-monophosphate (UMP). This is Orotidine 5'-phosphate decarboxylase (pyrF) from Thermotoga maritima (strain ATCC 43589 / DSM 3109 / JCM 10099 / NBRC 100826 / MSB8).